Reading from the N-terminus, the 59-residue chain is UPF0434 protein HEAR2489 (59 aa).

The protein belongs to the UPF0434 family.

In Herminiimonas arsenicoxydans, this protein is UPF0434 protein HEAR2489.